The primary structure comprises 409 residues: Elongation factor Tu, chloroplastic (409 aa).

One can recognise a tr-type G domain in the interval 10 to 214; it reads KPHINIGTIG…QVDSYIPTPT (205 aa). Positions 19–26 are G1; that stretch reads GHVDHGKT. GTP is bound at residue 19–26; sequence GHVDHGKT. Threonine 26 lines the Mg(2+) pocket. N6-methyllysine is present on lysine 57. Residues 60–64 form a G2 region; that stretch reads GITIN. The segment at 81 to 84 is G3; that stretch reads DCPG. Residues 81–85 and 136–139 each bind GTP; these read DCPGH and NKED. Residues 136 to 139 form a G4 region; it reads NKED. The segment at 174–176 is G5; it reads SAL.

It belongs to the TRAFAC class translation factor GTPase superfamily. Classic translation factor GTPase family. EF-Tu/EF-1A subfamily.

Its subcellular location is the plastid. The protein resides in the chloroplast. The enzyme catalyses GTP + H2O = GDP + phosphate + H(+). In terms of biological role, GTP hydrolase that promotes the GTP-dependent binding of aminoacyl-tRNA to the A-site of ribosomes during protein biosynthesis. This Euglena gracilis protein is Elongation factor Tu, chloroplastic (tufA).